Reading from the N-terminus, the 120-residue chain is Small ribosomal subunit protein bS16 (120 aa).

The interval 81-120 is disordered; that stretch reads GLAKRPARNNPQKAEPGEKAKERAAKRAEKAAAPAEDAAA. Basic and acidic residues predominate over residues 95–110; the sequence is EPGEKAKERAAKRAEK. The span at 111–120 shows a compositional bias: low complexity; the sequence is AAAPAEDAAA.

This sequence belongs to the bacterial ribosomal protein bS16 family.

The protein is Small ribosomal subunit protein bS16 of Methylobacterium radiotolerans (strain ATCC 27329 / DSM 1819 / JCM 2831 / NBRC 15690 / NCIMB 10815 / 0-1).